Here is a 120-residue protein sequence, read N- to C-terminus: NAD(P)H-quinone oxidoreductase subunit 3, chloroplastic (120 aa).

3 consecutive transmembrane segments (helical) span residues 9–29 (IFWA…LFSG), 64–84 (MFAL…PWAM), and 88–108 (ILGV…IVGL).

This sequence belongs to the complex I subunit 3 family. In terms of assembly, NDH is composed of at least 16 different subunits, 5 of which are encoded in the nucleus.

The protein localises to the plastid. Its subcellular location is the chloroplast thylakoid membrane. It catalyses the reaction a plastoquinone + NADH + (n+1) H(+)(in) = a plastoquinol + NAD(+) + n H(+)(out). The enzyme catalyses a plastoquinone + NADPH + (n+1) H(+)(in) = a plastoquinol + NADP(+) + n H(+)(out). NDH shuttles electrons from NAD(P)H:plastoquinone, via FMN and iron-sulfur (Fe-S) centers, to quinones in the photosynthetic chain and possibly in a chloroplast respiratory chain. The immediate electron acceptor for the enzyme in this species is believed to be plastoquinone. Couples the redox reaction to proton translocation, and thus conserves the redox energy in a proton gradient. The chain is NAD(P)H-quinone oxidoreductase subunit 3, chloroplastic from Spinacia oleracea (Spinach).